We begin with the raw amino-acid sequence, 195 residues long: Imidazoleglycerol-phosphate dehydratase (195 aa).

Belongs to the imidazoleglycerol-phosphate dehydratase family.

It is found in the cytoplasm. It catalyses the reaction D-erythro-1-(imidazol-4-yl)glycerol 3-phosphate = 3-(imidazol-4-yl)-2-oxopropyl phosphate + H2O. It functions in the pathway amino-acid biosynthesis; L-histidine biosynthesis; L-histidine from 5-phospho-alpha-D-ribose 1-diphosphate: step 6/9. This chain is Imidazoleglycerol-phosphate dehydratase, found in Aromatoleum aromaticum (strain DSM 19018 / LMG 30748 / EbN1) (Azoarcus sp. (strain EbN1)).